Reading from the N-terminus, the 142-residue chain is Ribosomal RNA large subunit methyltransferase H (142 aa).

S-adenosyl-L-methionine is bound at residue Gly-89.

This sequence belongs to the RNA methyltransferase RlmH family. Homodimer.

The protein resides in the cytoplasm. It carries out the reaction pseudouridine(1915) in 23S rRNA + S-adenosyl-L-methionine = N(3)-methylpseudouridine(1915) in 23S rRNA + S-adenosyl-L-homocysteine + H(+). Specifically methylates the pseudouridine at position 1915 (m3Psi1915) in 23S rRNA. The sequence is that of Ribosomal RNA large subunit methyltransferase H from Zymomonas mobilis subsp. mobilis (strain ATCC 31821 / ZM4 / CP4).